Here is a 109-residue protein sequence, read N- to C-terminus: Hainantoxin-XVIII-4 (109 aa).

Residues 1–18 (MKLSIIIIATSLVIAVVA) form the signal peptide. Positions 19 to 46 (FPSKDSKAIENDKTEQRMEIVVQETARA) are excised as a propeptide. Cystine bridges form between C55/C68, C59/C108, and C61/C81.

This sequence belongs to the neurotoxin 25 family. F7 subfamily. In terms of tissue distribution, expressed by the venom gland.

The protein localises to the secreted. Functionally, putative ion channel inhibitor. This is Hainantoxin-XVIII-4 from Cyriopagopus hainanus (Chinese bird spider).